The chain runs to 699 residues: Polyribonucleotide nucleotidyltransferase (699 aa).

D488 and D494 together coordinate Mg(2+). Residues 555 to 614 form the KH domain; that stretch reads PRIYSIKVNPDKIKDVIGKGGSVIRSLTEETNTIIDIEDNGIIKIVALDYDKAKQAIRRI. Positions 624–692 constitute an S1 motif domain; that stretch reads GAVYTGKVSH…RQGRIRLSMK (69 aa).

This sequence belongs to the polyribonucleotide nucleotidyltransferase family. Component of the RNA degradosome, which is a multiprotein complex involved in RNA processing and mRNA degradation. Requires Mg(2+) as cofactor.

The protein resides in the cytoplasm. The catalysed reaction is RNA(n+1) + phosphate = RNA(n) + a ribonucleoside 5'-diphosphate. Its function is as follows. Involved in mRNA degradation. Catalyzes the phosphorolysis of single-stranded polyribonucleotides processively in the 3'- to 5'-direction. The chain is Polyribonucleotide nucleotidyltransferase from Blochmanniella pennsylvanica (strain BPEN).